Consider the following 576-residue polypeptide: Tudor and KH domain-containing protein homolog (576 aa).

Positions 40-60 (EEADSGGQRPASGIRGQTEEQ) are disordered. KH domains are found at residues 65-127 (EVCL…RALL) and 136-199 (VVKV…RKML). The segment covering 209–224 (LVRSMEEVEQRREPRR) has biased composition (basic and acidic residues). Residues 209–253 (LVRSMEEVEQRREPRRSPTNSIASSMYSSQTSLSSHTQPRDKLMA) are disordered. Positions 232–243 (SSMYSSQTSLSS) are enriched in low complexity. Residues 310–375 (APYVGQIVAA…CELRTDFLTL (66 aa)) enclose the Tudor domain. The tract at residues 556–576 (ATDLENGNNNNASTTNGASAH) is disordered. Residues 561-576 (NGNNNNASTTNGASAH) show a composition bias toward low complexity.

This sequence belongs to the Tdrkh family. Interacts (via C-terminus) with AGO3 (via the N-terminal region when symmetrically methylated on arginine residues); this interaction is RNA-independent and may be required for AGO3 localization to the nuage. Interacts (via Tudor domain) with piwi (via N-terminus). Interacts with tral and me31B. In terms of tissue distribution, ovaries (at protein level). Expressed in the ovary and testis.

The protein resides in the cytoplasm. It is found in the nucleus. Its subcellular location is the cytoplasmic ribonucleoprotein granule. Functionally, involved in the piwi-interacting RNA (piRNA) metabolic process, which mediates the repression of transposable elements during meiosis by forming complexes composed of piRNAs and Piwi proteins, and governs the methylation and subsequent repression of transposons which is essential for germline integrity. Likely to act by recruiting Piwi proteins such as AGO3 and piwi to the piRNA biogenesis machinery in the nuage. Required for the final steps of primary piRNA biogenesis by participating in the 3' end-trimming of piwi-bound intermediates into mature piRNAs. The protein is Tudor and KH domain-containing protein homolog of Drosophila melanogaster (Fruit fly).